Consider the following 435-residue polypeptide: Zinc finger CCCH domain-containing protein 10 (435 aa).

A disordered region spans residues 1–36 (MPDRDSYANGTGSSGGGPGGGGSEEASGAGTGSGGA). Over residues 12-35 (GSSGGGPGGGGSEEASGAGTGSGG) the composition is skewed to gly residues. 3 C3H1-type zinc fingers span residues 36-63 (ATSD…HPDM), 73-99 (KNEF…HGSK), and 134-161 (KEEV…HLQR). The interval 166 to 190 (DARGGGGTGGGGSTGSAPPGRRHDL) is disordered. The segment covering 168 to 179 (RGGGGTGGGGST) has biased composition (gly residues). 2 positions are modified to omega-N-methylarginine: Arg-186 and Arg-187. A coiled-coil region spans residues 235-281 (GVECRLLEEENALLRKRVEELKKQVSNLLATNEVLLEQNAQFRNQAK). Over residues 315-331 (TTLSSQALQPRPVSQQE) the composition is skewed to polar residues. A disordered region spans residues 315–363 (TTLSSQALQPRPVSQQELVAPTGAPAAPPTNAAPPAAPPPPPPHLNPEI). A compositionally biased stretch (pro residues) spans 340 to 359 (AAPPTNAAPPAAPPPPPPHL).

It localises to the nucleus. In terms of biological role, specific regulator of miRNA biogenesis. Binds, via the C3H1-type zinc finger domains, to the binding motif 5'-GCAGCGC-3' on microRNA pri-MIR143 and negatively regulates the processing to mature microRNA. The chain is Zinc finger CCCH domain-containing protein 10 (Zc3h10) from Mus musculus (Mouse).